We begin with the raw amino-acid sequence, 376 residues long: Alcohol dehydrogenase class-3 (376 aa).

Cys47, His69, Cys99, Cys102, Cys105, Cys113, and Cys176 together coordinate Zn(2+).

Belongs to the zinc-containing alcohol dehydrogenase family. Class-III subfamily. In terms of assembly, homodimer. The cofactor is Zn(2+). As to expression, expressed in the skeletal muscle, heart, gill filaments and liver, with highest levels in the kidney.

It is found in the cytoplasm. It catalyses the reaction a primary alcohol + NAD(+) = an aldehyde + NADH + H(+). The catalysed reaction is a secondary alcohol + NAD(+) = a ketone + NADH + H(+). The enzyme catalyses S-(hydroxymethyl)glutathione + NADP(+) = S-formylglutathione + NADPH + H(+). It carries out the reaction S-(hydroxymethyl)glutathione + NAD(+) = S-formylglutathione + NADH + H(+). It catalyses the reaction S-nitrosoglutathione + NADH + H(+) = S-(hydroxysulfenamide)glutathione + NAD(+). Class-III ADH is remarkably ineffective in oxidizing ethanol, but it readily catalyzes the oxidation of long-chain primary alcohols and the oxidation of S-(hydroxymethyl) glutathione. Also acts as a S-nitroso-glutathione reductase by catalyzing the NADH-dependent reduction of S-nitrosoglutathione, thereby regulating protein S-nitrosylation. The polypeptide is Alcohol dehydrogenase class-3 (Sparus aurata (Gilthead sea bream)).